Consider the following 550-residue polypeptide: Formate--tetrahydrofolate ligase (550 aa).

Position 60-67 (threonine 60–threonine 67) interacts with ATP.

Belongs to the formate--tetrahydrofolate ligase family.

The catalysed reaction is (6S)-5,6,7,8-tetrahydrofolate + formate + ATP = (6R)-10-formyltetrahydrofolate + ADP + phosphate. It participates in one-carbon metabolism; tetrahydrofolate interconversion. The polypeptide is Formate--tetrahydrofolate ligase (Campylobacter curvus (strain 525.92)).